The chain runs to 155 residues: Cardio acceleratory peptide 2b (155 aa).

The N-terminal stretch at 1-26 (MKAIFSLYNIVSAILLLVLLAEFSTA) is a signal peptide. Residues 27–33 (ELNHDKN) constitute a propeptide that is removed on maturation. Position 47 is a valine amide (Val47). The propeptide occupies 50-85 (SDPSLANSLRDASDAAVFDGLYGDASQEDYNEADYQ). A Valine amide modification is found at Val96. A propeptide spanning residues 99–117 (SDAELRKFAHLLALQQVLD) is cleaved from the precursor. Leu134 is modified (leucine amide). Positions 138–155 (SVDAKAFSDASKGQQEFN) are excised as a propeptide.

This sequence belongs to the pyrokinin family.

It is found in the secreted. Functionally, CAP-1 and CAP-2, but not CAP-3 are ligands for the Capa receptor. CAP-1 and CAP-2 are probably components of the signal transduction pathway that leads to Malpighian tubule fluid secretion via the second messenger nitric oxide. This Drosophila pseudoobscura pseudoobscura (Fruit fly) protein is Cardio acceleratory peptide 2b.